Consider the following 621-residue polypeptide: UvrABC system protein C (621 aa).

Residues 20–106 enclose the GIY-YIG domain; it reads TQSGIYQFFD…IKSLKPKYNI (87 aa). Residues 212-247 form the UVR domain; the sequence is KALLKILESKMHTLSHNLQFEEAAIMRDRIQKITQM.

It belongs to the UvrC family. Interacts with UvrB in an incision complex.

It localises to the cytoplasm. Its function is as follows. The UvrABC repair system catalyzes the recognition and processing of DNA lesions. UvrC both incises the 5' and 3' sides of the lesion. The N-terminal half is responsible for the 3' incision and the C-terminal half is responsible for the 5' incision. The polypeptide is UvrABC system protein C (Helicobacter hepaticus (strain ATCC 51449 / 3B1)).